Consider the following 890-residue polypeptide: Alanine--tRNA ligase (890 aa).

4 residues coordinate Zn(2+): histidine 568, histidine 572, cysteine 680, and histidine 684.

This sequence belongs to the class-II aminoacyl-tRNA synthetase family. It depends on Zn(2+) as a cofactor.

Its subcellular location is the cytoplasm. It carries out the reaction tRNA(Ala) + L-alanine + ATP = L-alanyl-tRNA(Ala) + AMP + diphosphate. Functionally, catalyzes the attachment of alanine to tRNA(Ala) in a two-step reaction: alanine is first activated by ATP to form Ala-AMP and then transferred to the acceptor end of tRNA(Ala). Also edits incorrectly charged Ser-tRNA(Ala) and Gly-tRNA(Ala) via its editing domain. The chain is Alanine--tRNA ligase from Psychrobacter arcticus (strain DSM 17307 / VKM B-2377 / 273-4).